The primary structure comprises 250 residues: MSAAASPASERGWKSEKLDEAQALARSCAARRPDFQPCDGLSICATHSHGKCFKLHWCCHLGWCHCKYMYQPMTPVEQLPSTEIPARPREPTNTIQISVSLTEHFLKFASVFQPPLPPDSPRYCMISDLFIDNYQVKCINGKMCYVQKQPAPHSHRMSPEEVSAHDALISKESNTPKIDHCSSPSSSEDSGINAIGAHYVESCDEDTEEGAELSSEEDYSPESSWEPDECTLLSPSQSDLEVIETIETTV.

The disordered stretch occupies residues 201 to 250 (ESCDEDTEEGAELSSEEDYSPESSWEPDECTLLSPSQSDLEVIETIETTV). The segment covering 202–229 (SCDEDTEEGAELSSEEDYSPESSWEPDE) has biased composition (acidic residues).

It belongs to the UPF0524 family.

In terms of biological role, may play a role in neuronal and neurobehavioral development. This is UPF0524 protein C3orf70 (C3orf70) from Homo sapiens (Human).